The following is a 142-amino-acid chain: Large ribosomal subunit protein uL11 (142 aa).

Belongs to the universal ribosomal protein uL11 family. In terms of assembly, part of the ribosomal stalk of the 50S ribosomal subunit. Interacts with L10 and the large rRNA to form the base of the stalk. L10 forms an elongated spine to which L12 dimers bind in a sequential fashion forming a multimeric L10(L12)X complex. One or more lysine residues are methylated.

Forms part of the ribosomal stalk which helps the ribosome interact with GTP-bound translation factors. In Xanthomonas campestris pv. campestris (strain 8004), this protein is Large ribosomal subunit protein uL11.